Reading from the N-terminus, the 771-residue chain is MAPGPFSSALLSPPPAALPFLLLLWAGASRGQPCPGRCICQNVAPTLTMLCAKTGLLFVPPAIDRRVVELRLTDNFIAAVRRRDFANMTSLVHLTLSRNTIGQVAAGAFADLRALRALHLDSNRLAEVRGDQLRGLGNLRHLILGNNQIRRVESAAFDAFLSTVEDLDLSYNNLEALPWEAVGQMVNLNTLTLDHNLIDHIAEGTFVQLHKLVRLDMTSNRLHKLPPDGLFLRSQGTGPKPPTPLTVSFGGNPLHCNCELLWLRRLTREDDLETCATPEHLTDRYFWSIPEEEFLCEPPLITRQAGGRALVVEGQAVSLRCRAVGDPEPVVHWVAPDGRLLGNSSRTRVRGDGTLDVTITTLRDSGTFTCIASNAAGEATAPVEVCVVPLPLMAPPPAAPPPLTEPGSSDIATPGRPGANDSAAERRLVAAELTSNSVLIRWPAQRPVPGIRMYQVQYNSSVDDSLVYRMIPSTSQTFLVNDLAAGRAYDLCVLAVYDDGATALPATRVVGCVQFTTAGDPAPCRPLRAHFLGGTMIIAIGGVIVASVLVFIVLLMIRYKVYGDGDSRRVKGSRSLPRVSHVCSQTNGAGTGAAQAPALPAQDHYEALREVESQAAPAVAVEAKAMEAETASAEPEVVLGRSLGGSATSLCLLPSEETSGEESRAAVGPRRSRSGALEPPTSAPPTLALVPGGAAARPRPQQRYSFDGDYGALFQSHSYPRRARRTKRHRSTPHLDGAGGGAAGEDGDLGLGSARACLAFTSTEWMLESTV.

The first 31 residues, 1 to 31 (MAPGPFSSALLSPPPAALPFLLLLWAGASRG), serve as a signal peptide directing secretion. Residues 32-65 (QPCPGRCICQNVAPTLTMLCAKTGLLFVPPAIDR) enclose the LRRNT domain. The Extracellular segment spans residues 32-536 (QPCPGRCICQ…LRAHFLGGTM (505 aa)). LRR repeat units follow at residues 66-87 (RVVELRLTDNFIAAVRRRDFAN), 90-111 (SLVHLTLSRNTIGQVAAGAFAD), 114-135 (ALRALHLDSNRLAEVRGDQLRG), 138-159 (NLRHLILGNNQIRRVESAAFDA), 163-184 (TVEDLDLSYNNLEALPWEAVGQ), 187-208 (NLNTLTLDHNLIDHIAEGTFVQ), and 211-232 (KLVRLDMTSNRLHKLPPDGLFL). The N-linked (GlcNAc...) asparagine glycan is linked to Asn87. The LRRCT domain occupies 252 to 298 (NPLHCNCELLWLRRLTREDDLETCATPEHLTDRYFWSIPEEEFLCEP). The Ig-like domain maps to 299-386 (PLITRQAGGR…GEATAPVEVC (88 aa)). Cys321 and Cys370 form a disulfide bridge. Asn343 carries an N-linked (GlcNAc...) asparagine glycan. Positions 397-422 (PAAPPPLTEPGSSDIATPGRPGANDS) are disordered. The region spanning 424–520 (AERRLVAAEL…GCVQFTTAGD (97 aa)) is the Fibronectin type-III domain. The chain crosses the membrane as a helical span at residues 537 to 557 (IIAIGGVIVASVLVFIVLLMI). The Cytoplasmic portion of the chain corresponds to 558 to 771 (RYKVYGDGDS…STEWMLESTV (214 aa)). A phosphoserine mark is found at Ser613 and Ser718. Residues 654 to 743 (PSEETSGEES…HLDGAGGGAA (90 aa)) form a disordered region. Residues 719–732 (YPRRARRTKRHRST) are compositionally biased toward basic residues. Positions 768-771 (ESTV) match the PDZ-binding motif.

Belongs to the LRFN family. Can form heteromeric complexes with LRFN2, LRFN3, LRFN4 and LRFN5. Forms homomeric complexes, but not across cell junctions. Interacts with DLG1, DLG2, DLG3 and DLG4. Interacts with 2 AMPA receptor subunits GRIA1 and GRIA2 and NMDA receptor subunit GRIN1. Post-translationally, glycosylated.

It localises to the membrane. It is found in the synapse. Its subcellular location is the postsynaptic density membrane. Functionally, promotes neurite outgrowth in hippocampal neurons. Involved in the regulation and maintenance of excitatory synapses. Induces the clustering of excitatory postsynaptic proteins, including DLG4, DLGAP1, GRIA1 and GRIN1. In Homo sapiens (Human), this protein is Leucine-rich repeat and fibronectin type III domain-containing protein 1 (LRFN1).